Consider the following 228-residue polypeptide: Geranylgeranylglyceryl phosphate synthase (228 aa).

Lys13 is a binding site for sn-glycerol 1-phosphate. 2 residues coordinate Mg(2+): Asp15 and Thr41. Residues 159 to 164 (YIEYSG), Gly189, and 209 to 210 (GN) contribute to the sn-glycerol 1-phosphate site.

It belongs to the GGGP/HepGP synthase family. Group I subfamily. Mg(2+) is required as a cofactor.

It is found in the cytoplasm. The enzyme catalyses sn-glycerol 1-phosphate + (2E,6E,10E)-geranylgeranyl diphosphate = sn-3-O-(geranylgeranyl)glycerol 1-phosphate + diphosphate. Its pathway is membrane lipid metabolism; glycerophospholipid metabolism. Its function is as follows. Prenyltransferase that catalyzes the transfer of the geranylgeranyl moiety of geranylgeranyl diphosphate (GGPP) to the C3 hydroxyl of sn-glycerol-1-phosphate (G1P). This reaction is the first ether-bond-formation step in the biosynthesis of archaeal membrane lipids. The protein is Geranylgeranylglyceryl phosphate synthase of Methanospirillum hungatei JF-1 (strain ATCC 27890 / DSM 864 / NBRC 100397 / JF-1).